A 337-amino-acid polypeptide reads, in one-letter code: Calcium-binding protein 39-like (337 aa).

Belongs to the Mo25 family. As to quaternary structure, component of a trimeric complex composed of STK11/LKB1, STRAD (STRADA or STRADB) and CAB39/MO25 (CAB39/MO25alpha or CAB39L/MO25beta): the complex tethers STK11/LKB1 in the cytoplasm and stimulates its catalytic activity.

Functionally, component of a complex that binds and activates STK11/LKB1. In the complex, required to stabilize the interaction between CAB39/MO25 (CAB39/MO25alpha or CAB39L/MO25beta) and STK11/LKB1. The polypeptide is Calcium-binding protein 39-like (CAB39L) (Homo sapiens (Human)).